A 210-amino-acid polypeptide reads, in one-letter code: 7-carboxy-7-deazaguanine synthase (210 aa).

Residues 12–14 (LQG) and arginine 27 each bind substrate. The Radical SAM core domain occupies 18–210 (QAGRAAVFCR…LQTHKYIGIP (193 aa)). [4Fe-4S] cluster-binding residues include cysteine 31, cysteine 46, and cysteine 49. Threonine 51 lines the Mg(2+) pocket. Threonine 90 is a substrate binding site. S-adenosyl-L-methionine is bound by residues glycine 92, 133–135 (SPK), and 173–176 (QPMD). Proline 210 serves as a coordination point for substrate.

Belongs to the radical SAM superfamily. 7-carboxy-7-deazaguanine synthase family. As to quaternary structure, homodimer. [4Fe-4S] cluster serves as cofactor. It depends on S-adenosyl-L-methionine as a cofactor. Mg(2+) is required as a cofactor.

It carries out the reaction 6-carboxy-5,6,7,8-tetrahydropterin + H(+) = 7-carboxy-7-deazaguanine + NH4(+). It functions in the pathway purine metabolism; 7-cyano-7-deazaguanine biosynthesis. Catalyzes the complex heterocyclic radical-mediated conversion of 6-carboxy-5,6,7,8-tetrahydropterin (CPH4) to 7-carboxy-7-deazaguanine (CDG), a step common to the biosynthetic pathways of all 7-deazapurine-containing compounds. This Bordetella pertussis (strain Tohama I / ATCC BAA-589 / NCTC 13251) protein is 7-carboxy-7-deazaguanine synthase.